The following is a 93-amino-acid chain: LSM complex subunit LSM5 (93 aa).

Positions 7–87 (LPLEVIDKTI…IAILVPGGKK (81 aa)) constitute a Sm domain.

It belongs to the snRNP Sm proteins family. As to quaternary structure, component of the heptameric LSM1-LSM7 complex that forms a seven-membered ring structure with a donut shape. The LSm subunits are arranged in the order LSM1, LSM2, LSM3, LSM6, LSM5, LSM7 and LSM4. Except for LSM1, where a C-terminal helix crosses the ring structure to form additional interactions with LSM3 and LSM6, each subunit interacts only with its two neighboring subunits. The LSM1-LSM7 complex interacts with PAT1; within the complex PAT1 has direct interactions with LSM2 and LSM3. The LSM1-LSM7 complex interacts with XRN1. Component of the heptameric LSM2-LSM8 complex that forms a seven-membered ring structure with a donut shape; an RNA strand can pass through the hole in the center of the ring structure. The LSm subunits are arranged in the order LSM8, LSM2, LSM3, LSM6, LSM5, LSM7 and LSM4. Component of the spliceosome U4/U6-U5 tri-snRNP complex composed of the U4, U6 and U5 snRNAs and at least PRP3, PRP4, PRP6, PRP8, PRP18, PRP31, PRP38, SNU13, SNU23, SNU66, SNU114, SPP381, SMB1, SMD1, SMD2, SMD3, SMX2, SMX3, LSM2, LSM3, LSM4, LSM5, LSM6, LSM7, LSM8, BRR2 and DIB1. May be found in a complex comprising LSM2-LSM7 without LSM1 or LSM8; the complex associates with pre-P RNA and snoRNA SNR5.

Its subcellular location is the nucleus. It is found in the nucleolus. It localises to the cytoplasm. Functionally, component of LSm protein complexes, which are involved in RNA processing and may function in a chaperone-like manner. Component of the cytoplasmic LSM1-LSM7 complex which is involved in mRNA degradation by activating the decapping step. Together with PAT1, the LSM1-LSM7 complex binds to osmotic stress-activated mRNAs to attenuate the osmotic stress response, probably by limiting ribosome access to the mRNA and consequently translation. Component of the nuclear LSM2-LSM8 complex, which is involved in spliceosome assembly. The LSM2-LSM8 complex plays a role in the biogenesis of the spliceosomal U4/U6-U5 tri-snRNP complex by accelerating PRP24-mediated annealing of U4/U6 di-snRNA. The LSM2-LSM8 complex binds U6 snRNA terminating with a non-cyclic 3' phosphate group. LSM2-LSM8 is probably also involved in degradation of nuclear pre-mRNA by targeting them for decapping. LSM2-LSM8 could be involved in processing of pre-tRNAs, pre-rRNAs and U3 snoRNA, although involvement may be indirect. In a complex that probably contains LSM2-LSM7, but not LSM1 or LSM8, associates with the precursor of the RNA component of RNase P (pre-P RNA) and may be involved in maturing pre-P RNA; the complex also associates with snoRNA SNR5. This chain is LSM complex subunit LSM5 (LSM5), found in Saccharomyces cerevisiae (strain ATCC 204508 / S288c) (Baker's yeast).